Here is a 580-residue protein sequence, read N- to C-terminus: Probable inositol transporter 3 (580 aa).

12 helical membrane-spanning segments follow: residues 34–54 (GIGGLLFGYNTGVIAGALLYI), 69–89 (EIIVSMTVAGAIVGAAIGGWY), 104–124 (VLFLLGALVMVIAHAPWVIIL), 127–147 (LLVGFGVGMASMTSPLYISEM), 161–181 (GLLITGGQFLSYLINLAFVHT), 187–207 (WMLGVSAIPAIIQFCLMLTLP), 289–309 (FVGINTVMYYSPTILQFAGYA), 316–336 (ALALITSGLNAVGSVVSMMFV), 344–364 (LMIISMFGIITCLVILAAVFN), 455–475 (FGYLAIVFLGLYIIVYAPGMG), 493–513 (LAGGIAAVSNWMSNLVVSETF), and 524–544 (GTFLLFAGSSAVGLFFIWLLV).

It belongs to the major facilitator superfamily. Sugar transporter (TC 2.A.1.1) family.

It localises to the membrane. In terms of biological role, plasma membrane inositol-proton symporter. This is Probable inositol transporter 3 (INT3) from Arabidopsis thaliana (Mouse-ear cress).